A 229-amino-acid polypeptide reads, in one-letter code: Large ribosomal subunit protein uL1 (229 aa).

It belongs to the universal ribosomal protein uL1 family. In terms of assembly, part of the 50S ribosomal subunit.

Its function is as follows. Binds directly to 23S rRNA. The L1 stalk is quite mobile in the ribosome, and is involved in E site tRNA release. In terms of biological role, protein L1 is also a translational repressor protein, it controls the translation of the L11 operon by binding to its mRNA. This Clostridium kluyveri (strain ATCC 8527 / DSM 555 / NBRC 12016 / NCIMB 10680 / K1) protein is Large ribosomal subunit protein uL1.